The primary structure comprises 467 residues: Glutamate--tRNA ligase (467 aa).

The 'HIGH' region signature appears at 9-19 (PSPTGFLHIGG). The 'KMSKS' region signature appears at 250–254 (KLSKR). ATP is bound at residue lysine 253.

Belongs to the class-I aminoacyl-tRNA synthetase family. Glutamate--tRNA ligase type 1 subfamily. In terms of assembly, monomer.

It is found in the cytoplasm. The enzyme catalyses tRNA(Glu) + L-glutamate + ATP = L-glutamyl-tRNA(Glu) + AMP + diphosphate. Functionally, catalyzes the attachment of glutamate to tRNA(Glu) in a two-step reaction: glutamate is first activated by ATP to form Glu-AMP and then transferred to the acceptor end of tRNA(Glu). The protein is Glutamate--tRNA ligase of Mesomycoplasma hyopneumoniae (strain J / ATCC 25934 / NCTC 10110) (Mycoplasma hyopneumoniae).